An 814-amino-acid chain; its full sequence is Rho GTPase-activating protein 26 (814 aa).

The BAR domain maps to 7 to 262 (EFSDCCLDSP…MKENPLEHKT (256 aa)). The 105-residue stretch at 265 to 369 (PYTMEGYLYV…WMEAMDGREP (105 aa)) folds into the PH domain. Residues 383–568 (AQLDSIGFSI…ILIENHEKIF (186 aa)) enclose the Rho-GAP domain. Over residues 624–648 (LESVSSNPNSILNSSSSLQPNMNSS) the composition is skewed to low complexity. Positions 624–696 (LESVSSNPNS…MPTSSTSSDS (73 aa)) are disordered. The span at 662–672 (SLPPNPSPTSP) shows a compositional bias: pro residues. Residue S668 is modified to Phosphoserine. T670 carries the post-translational modification Phosphothreonine. Residue S671 is modified to Phosphoserine. The segment covering 673–696 (LSPSWPMFSAPSSPMPTSSTSSDS) has biased composition (low complexity). The 59-residue stretch at 756–814 (TPFRKAKALYACKAEHDSELSFTAGTVFDNVHPSQEPGWLEGTLNGKTGLIPENYVEFL) folds into the SH3 domain.

As to quaternary structure, interacts with NYAP1, NYAP2 and MYO16. Interacts with MICAL1 and WDR44. Binds to the C-terminus of PTK2/FAK1. In terms of assembly, (Microbial infection) Interacts with human parainfluenza virus type 2 proteins P and V. Post-translationally, phosphorylated in a PINK1-dependent fashion promoting retrograde mitochondrial trafficking and clustering.

The protein resides in the endosome membrane. Its subcellular location is the cytoplasm. It is found in the cell junction. It localises to the focal adhesion. The protein localises to the cytoskeleton. In terms of biological role, GTPase-activating protein for RHOA and CDC42. Facilitates mitochondrial quality control by promoting Parkin-mediated recruitment of autophagosomes to damaged mitochondria. Negatively regulates the growth of human parainfluenza virus type 2 by inhibiting hPIV-2-mediated RHOA activation via interaction with two of its viral proteins P and V. Its function is as follows. Associates with MICAL1 on the endosomal membrane to promote Rab8-Rab10-dependent tubule extension. After dissociation of MICAL1, recruits WDR44 which connects the endoplasmic reticulum (ER) with the endosomal tubule, thereby participating in the export of a subset of neosynthesized proteins. In Homo sapiens (Human), this protein is Rho GTPase-activating protein 26 (ARHGAP26).